We begin with the raw amino-acid sequence, 637 residues long: Galactofuranosyltransferase GlfT2 (637 aa).

The UDP-alpha-D-galactofuranose site is built by arginine 171, glutamine 200, asparagine 229, and aspartate 256. The Mn(2+) site is built by aspartate 256 and aspartate 258. The Proton acceptor role is filled by aspartate 372. Histidine 396 serves as a coordination point for Mn(2+).

It belongs to the glycosyltransferase 2 family. In terms of assembly, homotetramer. The cofactor is Mn(2+). Mg(2+) serves as cofactor.

The protein localises to the cell membrane. The enzyme catalyses beta-D-galactofuranosyl-(1-&gt;5)-beta-D-galactofuranosyl-(1-&gt;4)-alpha-L-rhamnosyl-(1-&gt;3)-N-acetyl-alpha-D-glucosaminyl-diphospho-trans,octa-cis-decaprenol + 28 UDP-alpha-D-galactofuranose = [beta-D-galactofuranosyl-(1-&gt;5)-beta-D-galactofuranosyl-(1-&gt;6)]14-beta-D-galactofuranosyl-(1-&gt;5)-beta-D-galactofuranosyl-(1-&gt;4)-alpha-L-rhamnopyranosyl-(1-&gt;3)-N-acetyl-alpha-D-glucosaminyl-diphospho-trans,octa-cis-decaprenol + 28 UDP + 28 H(+). Its pathway is cell wall biogenesis; cell wall polysaccharide biosynthesis. Involved in the galactan polymerization of the arabinogalactan (AG) region of the mycolylarabinogalactan-peptidoglycan (mAGP) complex, an essential component of the mycobacteria cell wall. Thus, successively transfers approximately 28 galactofuranosyl (Galf) residues from UDP-galactofuranose (UDP-Galf) onto the galactofuranosyl-galactofuranosyl-rhamnosyl-GlcNAc-diphospho-decaprenol (Galf-Galf-Rha-GlcNAc-PP-C50) acceptor produced by GlfT1, with alternating 1-&gt;5 and 1-&gt;6 links, forming a galactan domain with approximately 30 galactofuranosyl residues. The sequence is that of Galactofuranosyltransferase GlfT2 from Mycobacterium tuberculosis (strain ATCC 25618 / H37Rv).